A 524-amino-acid polypeptide reads, in one-letter code: Probable 1,3-beta-glucanosyltransferase GAS3 (524 aa).

An N-terminal signal peptide occupies residues 1–21 (MQLSKSILLAALAATPSLVNA). An intrachain disulfide couples Cys78 to Cys107. Residues Tyr96, Asn168, and Glu169 each coordinate (1,3-beta-D-glucosyl)n. The active-site Proton donor is Glu169. N-linked (GlcNAc...) asparagine glycosylation is present at Asn201. Asp212 and Arg217 together coordinate (1,3-beta-D-glucosyl)n. 2 cysteine pairs are disulfide-bonded: Cys226–Cys369 and Cys254–Cys286. Asn269 carries N-linked (GlcNAc...) asparagine glycosylation. The active-site Nucleophile is the Glu283. Tyr315 lines the (1,3-beta-D-glucosyl)n pocket. 4 N-linked (GlcNAc...) asparagine glycosylation sites follow: Asn350, Asn385, Asn404, and Asn422. Residues 461–498 (TSQSSSRSLTSSTSPSSSTGSSSSTGSSSASSSSKSKG) are disordered. A lipid anchor (GPI-anchor amidated glycine) is attached at Gly498. Positions 499–524 (VGNIVNVSFSQSGYLALFAGLISALL) are cleaved as a propeptide — removed in mature form.

This sequence belongs to the glycosyl hydrolase 72 family. The GPI-anchor is attached to the protein in the endoplasmic reticulum and serves to target the protein to the cell surface. There, the glucosamine-inositol phospholipid moiety is cleaved off and the GPI-modified mannoprotein is covalently attached via its lipidless GPI glycan remnant to the 1,6-beta-glucan of the outer cell wall layer. In terms of processing, N-glycosylated.

Its subcellular location is the secreted. It localises to the cell wall. The protein resides in the membrane. Splits internally a 1,3-beta-glucan molecule and transfers the newly generated reducing end (the donor) to the non-reducing end of another 1,3-beta-glucan molecule (the acceptor) forming a 1,3-beta linkage, resulting in the elongation of 1,3-beta-glucan chains in the cell wall. Involved in cell wall biosynthesis and morphogenesis. The sequence is that of Probable 1,3-beta-glucanosyltransferase GAS3 (GAS3) from Saccharomyces cerevisiae (strain ATCC 204508 / S288c) (Baker's yeast).